The following is a 624-amino-acid chain: (-)-beta-phellandrene synthase 2, chloroplastic (624 aa).

A chloroplast-targeting transit peptide spans 1–47; it reads MALVSVAPLVSMRRSLFSSPYELKSIDKTIPNLVMCRKRMLGRPSIR. Mg(2+) contacts are provided by Asp375, Asp379, and Asp527. The DDXXD motif signature appears at 375-379; that stretch reads DDIYD.

Belongs to the terpene synthase family. Tpsd subfamily. Mg(2+) serves as cofactor. Mn(2+) is required as a cofactor.

It is found in the plastid. The protein resides in the chloroplast. It catalyses the reaction (2E)-geranyl diphosphate = (-)-beta-phellandrene + diphosphate. It participates in terpene metabolism; oleoresin biosynthesis. The protein operates within secondary metabolite biosynthesis; terpenoid biosynthesis. Functionally, monoterpene synthase (TPS) involved in the biosynthesis of monoterpene natural products included in conifer oleoresin secretions and volatile emissions; these compounds contribute to biotic and abiotic stress defense against herbivores and pathogens. Catalyzes the conversion of (2E)-geranyl diphosphate (GPP) to (-)-beta-phellandrene. The protein is (-)-beta-phellandrene synthase 2, chloroplastic of Pinus contorta (Shore pine).